Reading from the N-terminus, the 272-residue chain is 1,4-dihydroxy-2-naphthoyl-CoA synthase (272 aa).

Substrate is bound by residues Arg-33, 72 to 76, Tyr-84, 116 to 120, Thr-142, Ser-148, Tyr-245, and Lys-260; these read SGGDQ and YAIGG. 141 to 143 is a binding site for hydrogencarbonate; sequence QTG.

Belongs to the enoyl-CoA hydratase/isomerase family. MenB subfamily. Hydrogencarbonate is required as a cofactor.

It catalyses the reaction 2-succinylbenzoyl-CoA + H(+) = 1,4-dihydroxy-2-naphthoyl-CoA + H2O. It participates in quinol/quinone metabolism; 1,4-dihydroxy-2-naphthoate biosynthesis; 1,4-dihydroxy-2-naphthoate from chorismate: step 6/7. It functions in the pathway quinol/quinone metabolism; menaquinone biosynthesis. Its function is as follows. Converts o-succinylbenzoyl-CoA (OSB-CoA) to 1,4-dihydroxy-2-naphthoyl-CoA (DHNA-CoA). This Staphylococcus epidermidis (strain ATCC 12228 / FDA PCI 1200) protein is 1,4-dihydroxy-2-naphthoyl-CoA synthase.